A 1103-amino-acid polypeptide reads, in one-letter code: Voltage-dependent calcium channel subunit alpha-2/delta-1 (1103 aa).

An N-terminal signal peptide occupies residues Met1 to Glu24. The Extracellular portion of the chain corresponds to Glu25–Gly1073. N-linked (GlcNAc...) asparagine glycosylation occurs at Asn92. Ser119 carries the post-translational modification Phosphoserine. Residues Asn136 and Asn184 are each glycosylated (N-linked (GlcNAc...) asparagine). The VWFA domain maps to Asp253–Leu430. Residues Asp259, Ser261, and Ser263 each coordinate a divalent metal cation. Residues Asp259 to Ser263 carry the MIDAS-like motif motif. N-linked (GlcNAc...) asparagine glycans are attached at residues Asn324 and Asn348. The cysteines at positions 404 and 1059 are disulfide-linked. A Cache domain is found at Trp446–Pro537. N-linked (GlcNAc...) asparagine glycosylation is found at Asn613, Asn781, and Asn888. Residues Val1074 to Leu1094 form a helical membrane-spanning segment. The Cytoplasmic portion of the chain corresponds to Val1095–Leu1103.

The protein belongs to the calcium channel subunit alpha-2/delta family. As to quaternary structure, dimer formed of alpha-2-1 and delta-1 chains; disulfide-linked. Voltage-dependent calcium channels are multisubunit complexes, consisting of alpha-1 (CACNA1), alpha-2 (CACNA2D), beta (CACNB) and delta (CACNA2D) subunits in a 1:1:1:1 ratio. In terms of processing, proteolytically processed into subunits alpha-2-1 and delta-1 that are disulfide-linked. As to expression, isoform 2A is expressed in skeletal muscle and aorta. Isoform 2B is expressed in brain. Isoform 2C is expressed in heart. Isoform 2D is expressed in heart and smooth muscle. Isoform 2E is expressed in smooth muscle. All five isoforms are expressed in the cardiovascular system.

The protein localises to the membrane. Its subcellular location is the cell membrane. The alpha-2/delta subunit of voltage-dependent calcium channels regulates calcium current density and activation/inactivation kinetics of the calcium channel. Plays an important role in excitation-contraction coupling. The chain is Voltage-dependent calcium channel subunit alpha-2/delta-1 (Cacna2d1) from Mus musculus (Mouse).